The primary structure comprises 337 residues: Probable RuBisCO transcriptional regulator (337 aa).

Residues 6–63 (FTLDQLRILKAIAVEGSFKRAADSLYVSQPAVSLQVQNLERQLDVPLFDRGGRRAQLT) enclose the HTH lysR-type domain. Residues 23-42 (FKRAADSLYVSQPAVSLQVQ) constitute a DNA-binding region (H-T-H motif).

Belongs to the LysR transcriptional regulatory family.

Trans-acting transcriptional regulator of RuBisCO genes (rbcL and rbcS) expression. The polypeptide is Probable RuBisCO transcriptional regulator (rbcR) (Trichormus variabilis (strain ATCC 29413 / PCC 7937) (Anabaena variabilis)).